The sequence spans 477 residues: Salivary plasminogen activator alpha 1 (477 aa).

Positions 1–36 are cleaved as a signal peptide; sequence MVNTMKTKLLCVLLLCGAVFSLPRQETYRQLARGSR. The region spanning 40-82 is the Fibronectin type-I domain; that stretch reads VACKDEITQMTYRRQESWLRPEVRSKRVEHCQCDRGQARCHTV. 14 disulfides stabilise this stretch: Cys-42–Cys-72, Cys-70–Cys-79, Cys-87–Cys-98, Cys-92–Cys-109, Cys-111–Cys-120, Cys-128–Cys-209, Cys-149–Cys-191, Cys-180–Cys-204, Cys-214–Cys-345, Cys-257–Cys-273, Cys-265–Cys-334, Cys-359–Cys-434, Cys-391–Cys-407, and Cys-424–Cys-452. The EGF-like domain maps to 83-121; it reads PVNSCSEPRCFNGGTCWQAVYFSDFVCQCPAGYTGKRCE. One can recognise a Kringle domain in the interval 128 to 209; it reads CYEGQGVTYR…TSESCSVPVC (82 aa). The N-linked (GlcNAc...) asparagine glycan is linked to Asn-153. The Peptidase S1 domain maps to 226 to 476; that stretch reads STGGLFTDIT…YLGWIRDNMH (251 aa). Residues His-272 and Asp-321 each act as charge relay system in the active site. N-linked (GlcNAc...) asparagine glycosylation is present at Asn-398. The active-site Charge relay system is Ser-428.

Belongs to the peptidase S1 family. As to quaternary structure, monomer.

It localises to the secreted. The catalysed reaction is Specific cleavage of Arg-|-Val bond in plasminogen to form plasmin.. Activity toward plasminogen is stimulated in the presence of fibrin I. In terms of biological role, probably essential to support the feeding habits of this exclusively haematophagous animal. Potent thrombolytic agent. This chain is Salivary plasminogen activator alpha 1, found in Desmodus rotundus (Vampire bat).